Reading from the N-terminus, the 32-residue chain is Fibrinolytic enzyme (32 aa).

In terms of processing, the N-terminus is blocked.

Inhibited by phenylmethanesulfonyl fluoride (PMSF). Not inhibited by EDTA, EGTA, beta-mercaptoethanol, indoacetamide, benzamidine, aprotinin, pepstatin A and trypsin inhibitor. Its function is as follows. Plasmin-like serine protease. Has fibrinolytic and fibrinogenolytic but not plasminogenolytic activity. Cleaves after Arg and Lys residues. In Hediste japonica (Polychaete worm), this protein is Fibrinolytic enzyme.